We begin with the raw amino-acid sequence, 1076 residues long: Nickel and cobalt resistance protein CnrA (1076 aa).

The next 12 membrane-spanning stretches (helical) occupy residues 14–34, 366–386, 390–410, 418–438, 475–495, 502–522, 561–581, 903–923, 928–948, 959–979, 1003–1023, and 1035–1055; these read WLVLFLTAVVAVIGAWQLNLL, TVAKNLIEGALLVVAILFALL, RAATIAALVIPLSLLVSAIGM, NLMSLGALDFGLIIDGAVIIV, PTVYGQLVIFMVFLPCLTFQG, SPMVITLMLALASAFVLSLTF, PMPFIGAGIATVAVATVAFTF, RLAIIVPLCFILIAATLYMAI, LTATVLTAVPLALAGGVFALL, AVGFIAVSGVAVLNGLVLISA, RPVLMTALVASLGFVPMAIAT, and TVVIGGLVTATVLTLFVLPAL.

The protein belongs to the resistance-nodulation-cell division (RND) (TC 2.A.6) family.

Its subcellular location is the cell inner membrane. Functionally, the products of the genes cnrA, cnrB, and cnrC are likely to form a membrane-bound protein complex catalyzing an energy-dependent efflux of Ni(2+) and Co(2+). The mechanism of action of the CnrCBA complex may be that of a proton/cation antiporter. In Cupriavidus metallidurans (strain ATCC 43123 / DSM 2839 / NBRC 102507 / CH34) (Ralstonia metallidurans), this protein is Nickel and cobalt resistance protein CnrA (cnrA).